A 499-amino-acid polypeptide reads, in one-letter code: Lysine--tRNA ligase (499 aa).

Residues Glu408 and Glu415 each coordinate Mg(2+).

Belongs to the class-II aminoacyl-tRNA synthetase family. Homodimer. Mg(2+) serves as cofactor.

Its subcellular location is the cytoplasm. The catalysed reaction is tRNA(Lys) + L-lysine + ATP = L-lysyl-tRNA(Lys) + AMP + diphosphate. This chain is Lysine--tRNA ligase, found in Bacillus cytotoxicus (strain DSM 22905 / CIP 110041 / 391-98 / NVH 391-98).